The sequence spans 180 residues: Probable DNA-directed RNA polymerase subunit delta (180 aa).

One can recognise an HTH HARE-type domain in the interval 14–81; that stretch reads LSMIEVARAI…GHNVWALRSW (68 aa). The tract at residues 89–180 is disordered; sequence EEVNHPEDEE…HQDDLDDDDE (92 aa). Acidic residues predominate over residues 115-163; it reads DSDDDDIIDYDSDDPEDEDLDVDEEDTNEDDYSDDDLDDADDNELDDGI.

The protein belongs to the RpoE family. As to quaternary structure, RNAP is composed of a core of 2 alpha, a beta and a beta' subunits. The core is associated with a delta subunit and one of several sigma factors.

Functionally, participates in both the initiation and recycling phases of transcription. In the presence of the delta subunit, RNAP displays an increased specificity of transcription, a decreased affinity for nucleic acids, and an increased efficiency of RNA synthesis because of enhanced recycling. This is Probable DNA-directed RNA polymerase subunit delta from Lactobacillus johnsonii (strain CNCM I-12250 / La1 / NCC 533).